Here is a 336-residue protein sequence, read N- to C-terminus: Ketol-acid reductoisomerase (NADP(+)) 1 (336 aa).

Residues 2–181 (AKVYYEKDVT…GATRAGVLET (180 aa)) form the KARI N-terminal Rossmann domain. NADP(+) is bound by residues 25-28 (YGSQ), Arg48, Ser52, and 82-85 (DELQ). His107 is a catalytic residue. Gly133 contributes to the NADP(+) binding site. The region spanning 182 to 327 (TFKEETETDL…RKLRGMMPFV (146 aa)) is the KARI C-terminal knotted domain. The Mg(2+) site is built by Asp190, Glu194, Glu226, and Glu230. A substrate-binding site is contributed by Ser251.

It belongs to the ketol-acid reductoisomerase family. The cofactor is Mg(2+).

The catalysed reaction is (2R)-2,3-dihydroxy-3-methylbutanoate + NADP(+) = (2S)-2-acetolactate + NADPH + H(+). It carries out the reaction (2R,3R)-2,3-dihydroxy-3-methylpentanoate + NADP(+) = (S)-2-ethyl-2-hydroxy-3-oxobutanoate + NADPH + H(+). The protein operates within amino-acid biosynthesis; L-isoleucine biosynthesis; L-isoleucine from 2-oxobutanoate: step 2/4. It functions in the pathway amino-acid biosynthesis; L-valine biosynthesis; L-valine from pyruvate: step 2/4. Its function is as follows. Involved in the biosynthesis of branched-chain amino acids (BCAA). Catalyzes an alkyl-migration followed by a ketol-acid reduction of (S)-2-acetolactate (S2AL) to yield (R)-2,3-dihydroxy-isovalerate. In the isomerase reaction, S2AL is rearranged via a Mg-dependent methyl migration to produce 3-hydroxy-3-methyl-2-ketobutyrate (HMKB). In the reductase reaction, this 2-ketoacid undergoes a metal-dependent reduction by NADPH to yield (R)-2,3-dihydroxy-isovalerate. The protein is Ketol-acid reductoisomerase (NADP(+)) 1 of Bacillus anthracis.